The primary structure comprises 541 residues: Effector protein hopAB1 (541 aa).

Disordered stretches follow at residues Met1–Gln94, Gln168–Gln222, and Arg317–Arg338. Over residues Thr18–Ser31 the composition is skewed to basic and acidic residues. Residues Ser183–Ser196 show a composition bias toward low complexity.

It belongs to the HopAB family.

It is found in the secreted. Effector protein that plays different roles depending on the species and plant cultivars that interact with the pathogen. Acts as a virulence determinant by enhancing the development of disease symptoms and bacterial growth. Acts as an avirulence factor by eliciting hypersensitive response (HR) and plant resistance. This chain is Effector protein hopAB1 (hopAB1), found in Pseudomonas savastanoi (Pseudomonas syringae pv. savastanoi).